Here is an 887-residue protein sequence, read N- to C-terminus: Cytoplasmic aconitate hydratase (887 aa).

Residues Gln84 and Asp204–His206 each bind substrate. [4Fe-4S] cluster is bound by residues Cys436, Cys502, and Cys505. Substrate is bound by residues Arg535, Arg540, Arg697, and Ser777–Arg778.

Belongs to the aconitase/IPM isomerase family. As to quaternary structure, interacts with gex-3. [4Fe-4S] cluster serves as cofactor.

It localises to the cytoplasm. The protein resides in the cytosol. The enzyme catalyses citrate = D-threo-isocitrate. In terms of biological role, catalyzes the isomerization of citrate to isocitrate via cis-aconitate. Has probably no RNA-binding activity. This Caenorhabditis elegans protein is Cytoplasmic aconitate hydratase (aco-1).